The following is a 509-amino-acid chain: ATP synthase subunit alpha (509 aa).

169-176 contributes to the ATP binding site; the sequence is GDRQTGKT.

Belongs to the ATPase alpha/beta chains family. In terms of assembly, F-type ATPases have 2 components, CF(1) - the catalytic core - and CF(0) - the membrane proton channel. CF(1) has five subunits: alpha(3), beta(3), gamma(1), delta(1), epsilon(1). CF(0) has three main subunits: a(1), b(2) and c(9-12). The alpha and beta chains form an alternating ring which encloses part of the gamma chain. CF(1) is attached to CF(0) by a central stalk formed by the gamma and epsilon chains, while a peripheral stalk is formed by the delta and b chains.

It localises to the cell inner membrane. The catalysed reaction is ATP + H2O + 4 H(+)(in) = ADP + phosphate + 5 H(+)(out). Its function is as follows. Produces ATP from ADP in the presence of a proton gradient across the membrane. The alpha chain is a regulatory subunit. This chain is ATP synthase subunit alpha, found in Rhizobium leguminosarum bv. trifolii (strain WSM2304).